The following is a 273-amino-acid chain: uncharacterized protein (273 aa).

A helical membrane pass occupies residues 7–25 (FFRWAFLIATVYVAYYFLV). Disordered stretches follow at residues 34–154 (KPQK…LKMK) and 168–273 (LHNS…DSLW). Over residues 36–54 (QKSKLTKLGKQKQRQKQKN) the composition is skewed to basic residues. The segment covering 55–91 (TKKDTLVNRETPSKKSQKLETSDALKSKSKDSSKKEP) has biased composition (basic and acidic residues). Over residues 92 to 101 (VVVPKKGTPK) the composition is skewed to low complexity. Over residues 115–144 (PKKEKLVGKNPAEKEDTTDVEDTQKLEQKH) the composition is skewed to basic and acidic residues. Positions 145 to 154 (STTPSSLKMK) are enriched in polar residues. Over residues 201–212 (KRQRQNQQKKLR) the composition is skewed to basic residues. Over residues 213-240 (AKEMQELADEEQRRRLAAHRKELHEANR) the composition is skewed to basic and acidic residues. Over residues 245 to 266 (LNNSSRSAYSYINNGQAGSSKG) the composition is skewed to polar residues.

It localises to the cytoplasm. The protein localises to the membrane. This is an uncharacterized protein from Schizosaccharomyces pombe (strain 972 / ATCC 24843) (Fission yeast).